Here is a 491-residue protein sequence, read N- to C-terminus: Peptidoglycan D,D-transpeptidase PbpA (491 aa).

Topologically, residues 1-8 (MNTSLRRV) are cytoplasmic. The chain crosses the membrane as a helical; Signal-anchor for type II membrane protein span at residues 9-29 (AVAIMVLIVLLLANATVTQVF). Over 30 to 491 (AADGLRADPR…TIAAALREGS (462 aa)) the chain is Periplasmic. A transpeptidase region spans residues 160–484 (GSVVALEPST…AAPIGRATIA (325 aa)). Serine 222 serves as the catalytic Acyl-ester intermediate.

It belongs to the transpeptidase family.

The protein localises to the cell inner membrane. The enzyme catalyses Preferential cleavage: (Ac)2-L-Lys-D-Ala-|-D-Ala. Also transpeptidation of peptidyl-alanyl moieties that are N-acyl substituents of D-alanine.. The protein operates within cell wall biogenesis; peptidoglycan biosynthesis. Functionally, transpeptidase that catalyzes cross-linking of the peptidoglycan cell wall. Required for the regulation of cell length. The chain is Peptidoglycan D,D-transpeptidase PbpA (pbpA) from Mycolicibacterium smegmatis (strain ATCC 700084 / mc(2)155) (Mycobacterium smegmatis).